The sequence spans 123 residues: Small ribosomal subunit protein uS11 (123 aa).

Belongs to the universal ribosomal protein uS11 family. As to quaternary structure, part of the 30S ribosomal subunit. Interacts with proteins S7 and S18. Binds to IF-3.

Its function is as follows. Located on the platform of the 30S subunit, it bridges several disparate RNA helices of the 16S rRNA. Forms part of the Shine-Dalgarno cleft in the 70S ribosome. The polypeptide is Small ribosomal subunit protein uS11 (Coxiella burnetii (strain CbuG_Q212) (Coxiella burnetii (strain Q212))).